The chain runs to 484 residues: MEKSWFNFMFSKGELEYRGELSKAMDSFAPGEKTTISQDRFIYDMDKNFYGWGGRSSYSNNVDLLVSSKDIRNFISDNTFFVRDSNKNSYSIYFDIKKKIFEIDNDFSDLEKFFYSYCSSSYLNNRSKGDNDLHYDSYIKNTKYNCTNHINSCIDSYFRSYICIDSNFLSDSNNYNESYIYNFICSESGKIRESKNYKIRTNRNRSNLISSKDFDITQNYNQLWIQCDNCYGLMYKKVKINVCEQCGHYLKMSSSERIELSIDPGTWNPMDEDMVSADPIKFHSKEEPYKNRIDSAQKTTGLTDAVQTGTGQLNGIPVALGVMDFRFMGGSMGSVVGEKITRLVEYATNQCLPLILVCSSGGARMQEGSLSLMQMAKISSVLCDYQSSKKLFYISILTSPTTGGVTASFGMLGDIIIAEPYAYIAFAGKRVIEQTLKKAVPEGSQAAESLLRKGLLDAIVPRNLLKSVLSELFQLHAFFPLNKN.

The CoA carboxyltransferase N-terminal domain maps to 223 to 484; it reads LWIQCDNCYG…LHAFFPLNKN (262 aa). Zn(2+) contacts are provided by C227, C230, C243, and C246. The C4-type zinc-finger motif lies at 227–246; that stretch reads CDNCYGLMYKKVKINVCEQC.

Belongs to the AccD/PCCB family. Acetyl-CoA carboxylase is a heterohexamer composed of biotin carboxyl carrier protein, biotin carboxylase and 2 subunits each of ACCase subunit alpha and ACCase plastid-coded subunit beta (accD). Requires Zn(2+) as cofactor.

The protein localises to the plastid. It localises to the chloroplast stroma. It catalyses the reaction N(6)-carboxybiotinyl-L-lysyl-[protein] + acetyl-CoA = N(6)-biotinyl-L-lysyl-[protein] + malonyl-CoA. It functions in the pathway lipid metabolism; malonyl-CoA biosynthesis; malonyl-CoA from acetyl-CoA: step 1/1. In terms of biological role, component of the acetyl coenzyme A carboxylase (ACC) complex. Biotin carboxylase (BC) catalyzes the carboxylation of biotin on its carrier protein (BCCP) and then the CO(2) group is transferred by the transcarboxylase to acetyl-CoA to form malonyl-CoA. The chain is Acetyl-coenzyme A carboxylase carboxyl transferase subunit beta, chloroplastic from Capsella bursa-pastoris (Shepherd's purse).